We begin with the raw amino-acid sequence, 492 residues long: uncharacterized protein (492 aa).

12 consecutive transmembrane segments (helical) span residues 13-33, 42-62, 97-117, 150-170, 180-200, 222-242, 258-278, 320-340, 359-379, 391-411, 428-448, and 463-483; these read LGFI…WRFG, GAFL…LMIL, FIIT…LIIL, GILV…SAGI, IMIP…LTLP, VWLS…GILI, AVTV…AVFG, FGIV…VSIV, LLAV…GAGL, GYLL…LFGG, VWWK…VVFL, and TTYV…SVIL.

It belongs to the sodium:neurotransmitter symporter (SNF) (TC 2.A.22) family.

Its subcellular location is the cell membrane. Putative sodium-dependent transporter. This is an uncharacterized protein from Methanocaldococcus jannaschii (strain ATCC 43067 / DSM 2661 / JAL-1 / JCM 10045 / NBRC 100440) (Methanococcus jannaschii).